The chain runs to 145 residues: 3-hydroxyacyl-[acyl-carrier-protein] dehydratase FabZ (145 aa).

The active site involves His-48.

This sequence belongs to the thioester dehydratase family. FabZ subfamily.

It is found in the cytoplasm. It carries out the reaction a (3R)-hydroxyacyl-[ACP] = a (2E)-enoyl-[ACP] + H2O. Functionally, involved in unsaturated fatty acids biosynthesis. Catalyzes the dehydration of short chain beta-hydroxyacyl-ACPs and long chain saturated and unsaturated beta-hydroxyacyl-ACPs. In Stutzerimonas stutzeri (strain A1501) (Pseudomonas stutzeri), this protein is 3-hydroxyacyl-[acyl-carrier-protein] dehydratase FabZ.